A 24-amino-acid polypeptide reads, in one-letter code: FENKVPEKQKLFQEDNGIPVHLKG.

Positions 1 to 13 (FENKVPEKQKLFQ) are enriched in basic and acidic residues. The tract at residues 1-24 (FENKVPEKQKLFQEDNGIPVHLKG) is disordered. Lysine 10 bears the N6-acetyllysine mark.

It belongs to the cytochrome c oxidase VIIa family. In terms of assembly, component of the cytochrome c oxidase (complex IV, CIV), a multisubunit enzyme composed of 14 subunits. The complex is composed of a catalytic core of 3 subunits MT-CO1, MT-CO2 and MT-CO3, encoded in the mitochondrial DNA, and 11 supernumerary subunits COX4I, COX5A, COX5B, COX6A, COX6B, COX6C, COX7A, COX7B, COX7C, COX8 and NDUFA4, which are encoded in the nuclear genome. The complex exists as a monomer or a dimer and forms supercomplexes (SCs) in the inner mitochondrial membrane with NADH-ubiquinone oxidoreductase (complex I, CI) and ubiquinol-cytochrome c oxidoreductase (cytochrome b-c1 complex, complex III, CIII), resulting in different assemblies (supercomplex SCI(1)III(2)IV(1) and megacomplex MCI(2)III(2)IV(2)). Interacts with PET100.

It is found in the mitochondrion inner membrane. Its pathway is energy metabolism; oxidative phosphorylation. Component of the cytochrome c oxidase, the last enzyme in the mitochondrial electron transport chain which drives oxidative phosphorylation. The respiratory chain contains 3 multisubunit complexes succinate dehydrogenase (complex II, CII), ubiquinol-cytochrome c oxidoreductase (cytochrome b-c1 complex, complex III, CIII) and cytochrome c oxidase (complex IV, CIV), that cooperate to transfer electrons derived from NADH and succinate to molecular oxygen, creating an electrochemical gradient over the inner membrane that drives transmembrane transport and the ATP synthase. Cytochrome c oxidase is the component of the respiratory chain that catalyzes the reduction of oxygen to water. Electrons originating from reduced cytochrome c in the intermembrane space (IMS) are transferred via the dinuclear copper A center (CU(A)) of subunit 2 and heme A of subunit 1 to the active site in subunit 1, a binuclear center (BNC) formed by heme A3 and copper B (CU(B)). The BNC reduces molecular oxygen to 2 water molecules using 4 electrons from cytochrome c in the IMS and 4 protons from the mitochondrial matrix. The chain is Cytochrome c oxidase subunit 7A2, mitochondrial (COX7A2) from Ovis aries (Sheep).